Reading from the N-terminus, the 419-residue chain is G protein-activated inward rectifier potassium channel 4 (419 aa).

The Cytoplasmic portion of the chain corresponds to 1 to 86 (MAGDSRNAMN…LFTTLVDLKW (86 aa)). The residue at position 5 (S5) is a Phosphoserine. The helical transmembrane segment at 87-111 (RFNLLVFTMVYTITWLFFGFIWWLI) threads the bilayer. The Extracellular segment spans residues 112–135 (AYVRGDLDHVGDQEWIPCVENLSG). Positions 136–147 (FVSAFLFSIETE) form an intramembrane region, helical; Pore-forming. Residues 148–154 (TTIGYGF) constitute an intramembrane region (pore-forming). The short motif at 149–154 (TIGYGF) is the Selectivity filter element. The Extracellular portion of the chain corresponds to 155 to 163 (RVITEKCPE). A helical membrane pass occupies residues 164 to 185 (GIILLLVQAILGSIVNAFMVGC). Residues 186–419 (MFVKISQPKK…SVSRATRGSM (234 aa)) are Cytoplasmic-facing. Residues 380 to 390 (LPSPPLLGGCA) are compositionally biased toward low complexity. A disordered region spans residues 380–419 (LPSPPLLGGCAEAEKEAEAEHDEEEEPNGLSVSRATRGSM). The span at 409-419 (LSVSRATRGSM) shows a compositional bias: polar residues.

This sequence belongs to the inward rectifier-type potassium channel (TC 1.A.2.1) family. KCNJ5 subfamily. As to quaternary structure, associates with KCNJ3/GIRK1 or KCNJ6/GRIK2 to form a G-protein-activated heteromultimer pore-forming unit. The resulting inward current is much larger. In terms of tissue distribution, most abundant in heart tissue where it is found predominantly in atria. Also found in brain, kidney, liver, spleen, lung and thymus.

Its subcellular location is the membrane. It carries out the reaction K(+)(in) = K(+)(out). Heteromultimer composed of KCNJ3/GIRK1 and KCNJ5/GIRK4 is activated by phosphatidylinositol 4,5 biphosphate (PtdIns(4,5)P2). Its function is as follows. Inward rectifier potassium channels are characterized by a greater tendency to allow potassium to flow into the cell rather than out of it. Their voltage dependence is regulated by the concentration of extracellular potassium; as external potassium is raised, the voltage range of the channel opening shifts to more positive voltages. The inward rectification is mainly due to the blockage of outward current by internal magnesium. Can be blocked by external barium. This potassium channel is controlled by G proteins. The sequence is that of G protein-activated inward rectifier potassium channel 4 (Kcnj5) from Rattus norvegicus (Rat).